The primary structure comprises 413 residues: Multifunctional CCA protein (413 aa).

2 residues coordinate ATP: G8 and R11. 2 residues coordinate CTP: G8 and R11. Residues D21 and D23 each contribute to the Mg(2+) site. ATP is bound by residues R91, R143, and R146. CTP-binding residues include R91, R143, and R146. The 102-residue stretch at 232-333 (TGVHVMMVVD…VRFFERSDAL (102 aa)) folds into the HD domain.

Belongs to the tRNA nucleotidyltransferase/poly(A) polymerase family. Bacterial CCA-adding enzyme type 1 subfamily. Monomer. Can also form homodimers and oligomers. It depends on Mg(2+) as a cofactor. The cofactor is Ni(2+).

It carries out the reaction a tRNA precursor + 2 CTP + ATP = a tRNA with a 3' CCA end + 3 diphosphate. It catalyses the reaction a tRNA with a 3' CCA end + 2 CTP + ATP = a tRNA with a 3' CCACCA end + 3 diphosphate. In terms of biological role, catalyzes the addition and repair of the essential 3'-terminal CCA sequence in tRNAs without using a nucleic acid template. Adds these three nucleotides in the order of C, C, and A to the tRNA nucleotide-73, using CTP and ATP as substrates and producing inorganic pyrophosphate. tRNA 3'-terminal CCA addition is required both for tRNA processing and repair. Also involved in tRNA surveillance by mediating tandem CCA addition to generate a CCACCA at the 3' terminus of unstable tRNAs. While stable tRNAs receive only 3'-terminal CCA, unstable tRNAs are marked with CCACCA and rapidly degraded. The chain is Multifunctional CCA protein from Burkholderia ambifaria (strain ATCC BAA-244 / DSM 16087 / CCUG 44356 / LMG 19182 / AMMD) (Burkholderia cepacia (strain AMMD)).